The primary structure comprises 421 residues: Alpha-1-antitrypsin-related protein (421 aa).

The signal sequence occupies residues 1 to 21; that stretch reads MPFSVSWGILLLAGLCCLVPS. 4 N-linked (GlcNAc...) asparagine glycosylation sites follow: N56, N110, N148, and N274.

The protein belongs to the serpin family. In terms of assembly, interacts with CANX and PDIA3. In terms of processing, glycosylated. Expressed in the liver, leukocytes and testis. Also detected in brain, colon, uterus, esophagus, spleen, trachea, kidney and lung.

It localises to the endoplasmic reticulum. Functionally, putative serine protease inhibitor. The protein is Alpha-1-antitrypsin-related protein (SERPINA2) of Homo sapiens (Human).